A 249-amino-acid polypeptide reads, in one-letter code: Caffeoyl-CoA O-methyltransferase 1 (249 aa).

Residue Lys-23 participates in substrate binding. Residues Thr-65, Glu-87, 89 to 90, Ser-95, Asp-113, and Ala-142 contribute to the S-adenosyl-L-methionine site; that span reads GV. Substrate is bound at residue Asp-165. Residue Asp-165 participates in a divalent metal cation binding. Asp-167 contributes to the S-adenosyl-L-methionine binding site. The a divalent metal cation site is built by Asp-191 and Asn-192. Asn-196 contributes to the substrate binding site.

The protein belongs to the class I-like SAM-binding methyltransferase superfamily. Cation-dependent O-methyltransferase family. CCoAMT subfamily. It depends on a divalent metal cation as a cofactor. As to expression, mostly expressed in petal limbs and tubes, and, at low levels, in flower buds, stamens, pistils, stems, roots and leaves.

It localises to the cytoplasm. Its subcellular location is the cytosol. The catalysed reaction is (E)-caffeoyl-CoA + S-adenosyl-L-methionine = (E)-feruloyl-CoA + S-adenosyl-L-homocysteine + H(+). It carries out the reaction (E)-5-hydroxyferuloyl-CoA + S-adenosyl-L-methionine = (E)-sinapoyl-CoA + S-adenosyl-L-homocysteine + H(+). It participates in aromatic compound metabolism; phenylpropanoid biosynthesis. Involved in the production of floral volatile phenylpropanoids in flowers of fragrant cultivars (e.g. cv. Mitchell and cv. V26) from cinnamic acid, a common precursor with the anthocyanin biosynthesis pathway involved in flower pigmentation. Methylates caffeoyl-CoA to feruloyl-CoA, also able to methylate 5-hydroxyferuloyl-CoA. This is Caffeoyl-CoA O-methyltransferase 1 from Petunia hybrida (Petunia).